The following is a 486-amino-acid chain: UDP-N-acetylmuramate--L-alanine ligase (486 aa).

126–132 contacts ATP; that stretch reads GTHGKTT.

The protein belongs to the MurCDEF family.

Its subcellular location is the cytoplasm. It carries out the reaction UDP-N-acetyl-alpha-D-muramate + L-alanine + ATP = UDP-N-acetyl-alpha-D-muramoyl-L-alanine + ADP + phosphate + H(+). The protein operates within cell wall biogenesis; peptidoglycan biosynthesis. In terms of biological role, cell wall formation. This Pectobacterium carotovorum subsp. carotovorum (strain PC1) protein is UDP-N-acetylmuramate--L-alanine ligase.